We begin with the raw amino-acid sequence, 240 residues long: MLVFAGLGNPGAKYADNRHNVGFMAADAIARRHSFSPWSKKFQGLIAEGTIAGEKIILIKPQTFMNLSGQSVGEALRFYKLELSALTVFYDEIDLAEGKLRIKTGGGAGGHNGIRSIDGHIGNAYRRVRIGVGHPGIKEMVQHHVLGDFAKADREWLDPLLDAIADNAAMIVKGDESGFMNKAALAVQGKAIAELEKPAQKQQPKQQSHIRQARSQQAPAKLPETGPMAAMLKKLFGNKD.

TRNA is bound at residue tyrosine 14. Histidine 19 acts as the Proton acceptor in catalysis. TRNA is bound by residues phenylalanine 64, asparagine 66, and asparagine 112. A disordered region spans residues 196 to 227 (EKPAQKQQPKQQSHIRQARSQQAPAKLPETGP). Over residues 209–218 (HIRQARSQQA) the composition is skewed to polar residues.

It belongs to the PTH family. In terms of assembly, monomer.

Its subcellular location is the cytoplasm. The catalysed reaction is an N-acyl-L-alpha-aminoacyl-tRNA + H2O = an N-acyl-L-amino acid + a tRNA + H(+). In terms of biological role, hydrolyzes ribosome-free peptidyl-tRNAs (with 1 or more amino acids incorporated), which drop off the ribosome during protein synthesis, or as a result of ribosome stalling. Its function is as follows. Catalyzes the release of premature peptidyl moieties from peptidyl-tRNA molecules trapped in stalled 50S ribosomal subunits, and thus maintains levels of free tRNAs and 50S ribosomes. This chain is Peptidyl-tRNA hydrolase, found in Mesorhizobium japonicum (strain LMG 29417 / CECT 9101 / MAFF 303099) (Mesorhizobium loti (strain MAFF 303099)).